The following is a 605-amino-acid chain: MLVVFPYQGSSIILESGNVNDYEVVYPQKVPSLPKGGVQNPQPETKYEDTMQYEFHVNGEPVVPHLEKNKGLFSEDYTETHYASDGREITTSPSVQDHCYYYGYIQNEADSSAAISACDGLKGHFKHQGETYFIEPLKLSNSEAHAIYKDENVEEEDETPKICGLTQTTWESDEPFKNTSLLIYTPEQNRYLQAKKYIEFYVAVDNRMYRHYKRNKTVIKRRVYELVNILNTIFRRLNFYIALIGLEIWSKRDKVNVQSDVKVTLKSFGKWREKKVAATQKEYNAQLLTRIDFNGNTVGLAALGALCSVKYSVAVIQDYSKRTSMVASTMAHEMGHNLGINHDRASCTSCGSNKCIMSTKRTKPAYRFSSCSVREHRRYLLRDRPQCILNKPLITDIVAPAICGNYFVEVGEECDCGSPRDCQSACCNAATCKLKHGAQCDSGECCRKCKFKKAGAKCRAVKDDCDLPERCTGRSAECPTDIFRRNGLPCQNNQGYCYNGKCPTLTNQCIAFMGPNVKVSRDSCFTLNQRGKGCGYCRMQNGAKFPCAAKDIKCGKLFCKKRNSKICNCLISPDDPNYGMVEPGTKCGDGVVCSNRKCVKLQRVY.

The signal sequence occupies residues 1 to 11; that stretch reads MLVVFPYQGSS. A propeptide spanning residues 12–179 is cleaved from the precursor; sequence IILESGNVND…WESDEPFKNT (168 aa). 2 N-linked (GlcNAc...) asparagine glycosylation sites follow: Asn-178 and Asn-215. Residues 196-392 form the Peptidase M12B domain; that stretch reads KYIEFYVAVD…DRPQCILNKP (197 aa). Disulfide bonds link Cys-307-Cys-387, Cys-347-Cys-371, Cys-350-Cys-355, Cys-403-Cys-432, Cys-414-Cys-427, Cys-416-Cys-422, Cys-426-Cys-449, Cys-440-Cys-446, Cys-445-Cys-471, Cys-458-Cys-478, Cys-465-Cys-497, Cys-490-Cys-502, Cys-509-Cys-559, Cys-524-Cys-567, Cys-537-Cys-547, Cys-554-Cys-593, and Cys-587-Cys-598. His-332 contributes to the Zn(2+) binding site. Residue Glu-333 is part of the active site. Residues His-336 and His-342 each coordinate Zn(2+). Residues 400–486 form the Disintegrin domain; sequence PAICGNYFVE…ECPTDIFRRN (87 aa). The D/ECD-tripeptide signature appears at 464 to 466; it reads DCD.

Belongs to the venom metalloproteinase (M12B) family. P-III subfamily. P-IIIa sub-subfamily. Monomer. Zn(2+) is required as a cofactor. In terms of tissue distribution, expressed by the venom gland.

Its subcellular location is the secreted. Its function is as follows. Snake venom zinc metalloproteinase that inhibits platelet aggregation and degrades fibrinogen. In Bungarus fasciatus (Banded krait), this protein is Zinc metalloproteinase-disintegrin-like BfMP.